A 70-amino-acid chain; its full sequence is Large ribosomal subunit protein eL43 (70 aa).

Positions 36, 39, 55, and 58 each coordinate Zn(2+). Residues 36–58 (CPVCKTTGKVVRIASGVWYCKKC) form a C4-type zinc finger.

Belongs to the eukaryotic ribosomal protein eL43 family. Putative zinc-binding subfamily. In terms of assembly, part of the 50S ribosomal subunit. It depends on Zn(2+) as a cofactor.

Binds to the 23S rRNA. The chain is Large ribosomal subunit protein eL43 from Sulfurisphaera tokodaii (strain DSM 16993 / JCM 10545 / NBRC 100140 / 7) (Sulfolobus tokodaii).